Consider the following 276-residue polypeptide: Nickel import system permease protein NikC (276 aa).

The next 5 helical transmembrane spans lie at 10-30 (LIFFVFGAFIFVMIVLQFFVS), 73-93 (LFVTVLTLIAIVVIGVTLGLF), 108-128 (FIDVGLSIPEFIIVIALASFF), 186-206 (IIPAIIVLMVVDFGKIILYIS), and 238-258 (IMLIAPASVIAITILIFNLTG). Positions 69-258 (ARSTLFVTVL…ITILIFNLTG (190 aa)) constitute an ABC transmembrane type-1 domain.

This sequence belongs to the binding-protein-dependent transport system permease family. OppBC subfamily. As to quaternary structure, the complex is composed of two ATP-binding proteins (NikD and NikE), two transmembrane proteins (NikB and NikC) and a solute-binding protein (NikA).

The protein resides in the cell membrane. Its function is as follows. Part of the ABC transporter complex NikABCDE (Opp2) involved in nickel import. Probably responsible for the translocation of the substrate across the membrane. The protein is Nickel import system permease protein NikC of Staphylococcus aureus (strain bovine RF122 / ET3-1).